A 227-amino-acid chain; its full sequence is Ureidoacrylate amidohydrolase RutB (227 aa).

The Proton acceptor role is filled by aspartate 22. Residue lysine 131 is part of the active site. Cysteine 164 functions as the Nucleophile in the catalytic mechanism.

The protein belongs to the isochorismatase family. RutB subfamily.

It catalyses the reaction (Z)-3-ureidoacrylate + H2O + H(+) = (Z)-3-aminoacrylate + NH4(+) + CO2. The catalysed reaction is (Z)-3-ureidoacrylate + H2O = (Z)-3-aminoacrylate + carbamate + H(+). The enzyme catalyses (Z)-2-methylureidoacrylate + H2O + H(+) = (Z)-2-methylaminoacrylate + NH4(+) + CO2. Hydrolyzes ureidoacrylate to form aminoacrylate and carbamate. The carbamate hydrolyzes spontaneously, thereby releasing one of the nitrogen atoms of the pyrimidine ring as ammonia and one of its carbon atoms as CO2. The polypeptide is Ureidoacrylate amidohydrolase RutB (Azorhizobium caulinodans (strain ATCC 43989 / DSM 5975 / JCM 20966 / LMG 6465 / NBRC 14845 / NCIMB 13405 / ORS 571)).